The sequence spans 234 residues: Probable septum site-determining protein MinC (234 aa).

Belongs to the MinC family. In terms of assembly, interacts with MinD and FtsZ.

In terms of biological role, cell division inhibitor that blocks the formation of polar Z ring septums. Rapidly oscillates between the poles of the cell to destabilize FtsZ filaments that have formed before they mature into polar Z rings. Prevents FtsZ polymerization. This Buchnera aphidicola subsp. Baizongia pistaciae (strain Bp) protein is Probable septum site-determining protein MinC.